The primary structure comprises 256 residues: 5-keto-4-deoxy-D-glucarate aldolase (256 aa).

H50 acts as the Proton acceptor in catalysis. Q151 is a substrate binding site. E153 contributes to the Mg(2+) binding site. The substrate site is built by S178 and D179. D179 serves as a coordination point for Mg(2+).

This sequence belongs to the HpcH/HpaI aldolase family. KDGluc aldolase subfamily. Homohexamer; trimer of dimers. Requires Mg(2+) as cofactor.

It catalyses the reaction 5-dehydro-4-deoxy-D-glucarate = 2-hydroxy-3-oxopropanoate + pyruvate. It carries out the reaction 2-dehydro-3-deoxy-D-glucarate = 2-hydroxy-3-oxopropanoate + pyruvate. It participates in carbohydrate acid metabolism; galactarate degradation; D-glycerate from galactarate: step 2/3. Functionally, catalyzes the reversible retro-aldol cleavage of both 5-keto-4-deoxy-D-glucarate and 2-keto-3-deoxy-D-glucarate to pyruvate and tartronic semialdehyde. The chain is 5-keto-4-deoxy-D-glucarate aldolase from Shigella sonnei (strain Ss046).